Reading from the N-terminus, the 215-residue chain is Pyrrolidone-carboxylate peptidase (215 aa).

Active-site residues include glutamate 80, cysteine 143, and histidine 167.

This sequence belongs to the peptidase C15 family. In terms of assembly, homotetramer.

The protein resides in the cytoplasm. The catalysed reaction is Release of an N-terminal pyroglutamyl group from a polypeptide, the second amino acid generally not being Pro.. In terms of biological role, removes 5-oxoproline from various penultimate amino acid residues except L-proline. The sequence is that of Pyrrolidone-carboxylate peptidase from Bacillus thuringiensis (strain Al Hakam).